Reading from the N-terminus, the 304-residue chain is Putative S-adenosyl-L-methionine-dependent methyltransferase MSMEG_1481/MSMEI_1445 (304 aa).

S-adenosyl-L-methionine contacts are provided by residues Asp127 and 156-157 (DL).

The protein belongs to the UPF0677 family.

Exhibits S-adenosyl-L-methionine-dependent methyltransferase activity. This Mycolicibacterium smegmatis (strain ATCC 700084 / mc(2)155) (Mycobacterium smegmatis) protein is Putative S-adenosyl-L-methionine-dependent methyltransferase MSMEG_1481/MSMEI_1445.